A 158-amino-acid polypeptide reads, in one-letter code: Serglycin (158 aa).

The signal sequence occupies residues 1–27 (MMQKLLKCSRLVLALALILVLESSVQG). C40 and C49 form a disulfide bridge. Residues S94 and S96 are each glycosylated (O-linked (Xyl...) (glycosaminoglycan) serine). Tandem repeats lie at residues 94 to 95 (SG), 96 to 97 (SG), 98 to 99 (FG), 100 to 101 (SG), 102 to 103 (SG), 104 to 105 (SG), 106 to 107 (SG), 108 to 109 (SG), and 110 to 111 (SG). The 9 X 2 AA tandem repeats of [SF]-G stretch occupies residues 94–111 (SGSGFGSGSGSGSGSGSG). O-linked (Xyl...) (glycosaminoglycan) serine glycans are attached at residues S100, S102, S104, S106, S108, and S110. The tract at residues 134 to 158 (RSLDRNLPSDSQDLGQHGLEEDFML) is disordered.

The protein belongs to the serglycin family. Binds to activated CD44 and to GZMB. O-glycosylated; contains chondroitin sulfate and heparan sulfate.

The protein localises to the cytoplasmic granule. It is found in the cytolytic granule. It localises to the secreted. The protein resides in the extracellular space. Its subcellular location is the golgi apparatus. Functionally, plays a role in formation of mast cell secretory granules and mediates storage of various compounds in secretory vesicles. Required for storage of some proteases in both connective tissue and mucosal mast cells and for storage of granzyme B in T-lymphocytes. Plays a role in localizing neutrophil elastase in azurophil granules of neutrophils. Mediates processing of MMP2. Plays a role in cytotoxic cell granule-mediated apoptosis by forming a complex with granzyme B which is delivered to cells by perforin to induce apoptosis. Regulates the secretion of TNF-alpha and may also regulate protease secretion. Inhibits bone mineralization. This chain is Serglycin (SRGN), found in Homo sapiens (Human).